The following is a 636-amino-acid chain: Amylosucrase (636 aa).

Asp-152, His-195, Gln-262, and Arg-292 together coordinate substrate. Catalysis depends on Asp-294, which acts as the Nucleophile. Glu-336 functions as the Proton donor in the catalytic mechanism. Residues His-400, Asp-401, and Arg-517 each coordinate substrate.

The protein belongs to the glycosyl hydrolase 13 family. In terms of assembly, monomer.

The protein resides in the secreted. The catalysed reaction is [(1-&gt;4)-alpha-D-glucosyl](n) + sucrose = [(1-&gt;4)-alpha-D-glucosyl](n+1) + D-fructose. Amylosucrase favors hydrolysis at low sucrose concentrations, and polymerization at high sucrose concentrations. Competitively inhibited by fructose. Catalyzes the synthesis of alpha-glucan from sucrose. Catalyzes, in addition, sucrose hydrolysis, maltose and maltotriose synthesis by successive transfers of the glucosyl moiety of sucrose onto the released glucose, and finally turanose and trehalulose synthesis, these two sucrose isomers being obtained by glucosyl transfer onto fructose. The sequence is that of Amylosucrase (ams) from Neisseria polysaccharea.